The primary structure comprises 174 residues: Translationally-controlled tumor protein homolog 1 (174 aa).

The TCTP domain occupies 1 to 174 (MRVFKDIVGY…FKDGLESVKY (174 aa)).

The protein belongs to the TCTP family.

Its subcellular location is the cytoplasm. Functionally, involved in calcium binding and microtubule stabilization. The protein is Translationally-controlled tumor protein homolog 1 of Dictyostelium discoideum (Social amoeba).